The following is a 183-amino-acid chain: Nucleoside triphosphate pyrophosphatase (183 aa).

The Proton acceptor role is filled by Asp71.

Belongs to the Maf family. It depends on a divalent metal cation as a cofactor.

It is found in the cytoplasm. The catalysed reaction is a ribonucleoside 5'-triphosphate + H2O = a ribonucleoside 5'-phosphate + diphosphate + H(+). It catalyses the reaction a 2'-deoxyribonucleoside 5'-triphosphate + H2O = a 2'-deoxyribonucleoside 5'-phosphate + diphosphate + H(+). Nucleoside triphosphate pyrophosphatase. May have a dual role in cell division arrest and in preventing the incorporation of modified nucleotides into cellular nucleic acids. The protein is Nucleoside triphosphate pyrophosphatase of Campylobacter jejuni subsp. jejuni serotype O:6 (strain 81116 / NCTC 11828).